A 115-amino-acid polypeptide reads, in one-letter code: Holo-[acyl-carrier-protein] synthase (115 aa).

Positions 8 and 56 each coordinate Mg(2+).

Belongs to the P-Pant transferase superfamily. AcpS family. It depends on Mg(2+) as a cofactor.

Its subcellular location is the cytoplasm. It catalyses the reaction apo-[ACP] + CoA = holo-[ACP] + adenosine 3',5'-bisphosphate + H(+). Functionally, transfers the 4'-phosphopantetheine moiety from coenzyme A to a Ser of acyl-carrier-protein. The sequence is that of Holo-[acyl-carrier-protein] synthase from Ureaplasma parvum serovar 3 (strain ATCC 27815 / 27 / NCTC 11736).